Here is a 603-residue protein sequence, read N- to C-terminus: Pyruvate decarboxylase 4 (603 aa).

Substrate contacts are provided by Asp-65 and His-152. The thiamine pyrophosphate binding stretch occupies residues 430–512 (DSWFNCQKLK…FLINNGGYTI (83 aa)). Residues Asp-480, Asn-507, and Gly-509 each contribute to the Mg(2+) site. Residue Glu-513 participates in substrate binding.

The protein belongs to the TPP enzyme family. In terms of assembly, homotetramer. It depends on a metal cation as a cofactor. Thiamine diphosphate is required as a cofactor. In terms of tissue distribution, expressed in shoots and at lowe levels in roots, flowers and siliques.

It catalyses the reaction a 2-oxocarboxylate + H(+) = an aldehyde + CO2. The polypeptide is Pyruvate decarboxylase 4 (PDC4) (Arabidopsis thaliana (Mouse-ear cress)).